Reading from the N-terminus, the 287-residue chain is ATP synthase gamma chain (287 aa).

The protein belongs to the ATPase gamma chain family. In terms of assembly, F-type ATPases have 2 components, CF(1) - the catalytic core - and CF(0) - the membrane proton channel. CF(1) has five subunits: alpha(3), beta(3), gamma(1), delta(1), epsilon(1). CF(0) has three main subunits: a, b and c.

The protein resides in the cell inner membrane. Functionally, produces ATP from ADP in the presence of a proton gradient across the membrane. The gamma chain is believed to be important in regulating ATPase activity and the flow of protons through the CF(0) complex. The protein is ATP synthase gamma chain of Proteus mirabilis (strain HI4320).